A 585-amino-acid polypeptide reads, in one-letter code: ATP-dependent RNA helicase DBP3 (585 aa).

A disordered region spans residues 1-124 (MTTSATEKAL…SSSASAASFT (124 aa)). The segment covering 26–43 (AKAAAAAGASASTSLEGS) has biased composition (low complexity). 2 stretches are compositionally biased toward basic residues: residues 52–64 (KDKKDKKDKKDKK) and 79–93 (AKKRRKEEKKAKKAA). Residues 94 to 124 (AKSGAATSLESTPAASPAPAASSSASAASFT) show a composition bias toward low complexity. A Q motif motif is present at residues 159 to 187 (FRELDGKVDAAVKKTLDSQGFSTPTPIQA). In terms of domain architecture, Helicase ATP-binding spans 190–377 (WPVLLQNKDV…ESFMNGPVRV (188 aa)). 203-210 (AETGSGKT) lines the ATP pocket. Positions 322–325 (DEAD) match the DEAD box motif. The region spanning 406–554 (RLNDFLRSVN…KVPDALTKFP (149 aa)) is the Helicase C-terminal domain.

Belongs to the DEAD box helicase family. DDX5/DBP2 subfamily.

It is found in the nucleus. The protein localises to the nucleolus. The enzyme catalyses ATP + H2O = ADP + phosphate + H(+). Its function is as follows. ATP-dependent RNA helicase required for 60S ribosomal subunit synthesis. Involved in efficient pre-rRNA processing, predominantly at site A3, which is necessary for the normal formation of 25S and 5.8S rRNAs. The polypeptide is ATP-dependent RNA helicase DBP3 (DBP3) (Mycosarcoma maydis (Corn smut fungus)).